Consider the following 287-residue polypeptide: Nucleotide-binding protein Asuc_0930 (287 aa).

8-15 (GRSGAGKS) contacts ATP. GTP is bound at residue 56 to 59 (DIRN).

Belongs to the RapZ-like family.

In terms of biological role, displays ATPase and GTPase activities. This Actinobacillus succinogenes (strain ATCC 55618 / DSM 22257 / CCUG 43843 / 130Z) protein is Nucleotide-binding protein Asuc_0930.